Here is a 113-residue protein sequence, read N- to C-terminus: MEGRVQLMKALLARPLRPAARRWRNPIPFPETFDGDTDRLPEFIVQTSSYMFVDENTFSNDALKVTFLITRLTGPALQWVIPYIKKESPLLSDYRGFLAEMKRVFGWEEDEDF.

The protein belongs to the FAM127 family.

The sequence is that of Retrotransposon Gag-like protein 8B (RTL8B) from Homo sapiens (Human).